Reading from the N-terminus, the 202-residue chain is Urease accessory protein UreF (202 aa).

The protein belongs to the UreF family. UreD, UreF and UreG form a complex that acts as a GTP-hydrolysis-dependent molecular chaperone, activating the urease apoprotein by helping to assemble the nickel containing metallocenter of UreC. The UreE protein probably delivers the nickel.

It localises to the cytoplasm. Functionally, required for maturation of urease via the functional incorporation of the urease nickel metallocenter. The chain is Urease accessory protein UreF from Sporosarcina pasteurii (Bacillus pasteurii).